The sequence spans 295 residues: MAHINEIKLRMKSIRETRQITNAMKLISAAKLKKAKKQLEKASPYFEKVRSTMADILLRSGKIENKYFHARDEKTDKKKAYIVITGEKGFAGGYNHNIIKFTEECLKQDKDPLLFVAGNVGRNHFLKNKYNVYMEFDYPVQNPSIYMAREIMEVILDLFDKEVFDELYIIYTHMFSNIKMEPSIIKLLPLELDTLKEKLQINESTEKIVDGCMEYEPDPEYVFNVLVRKYIKGVVYGAFVESFTSEQNSRMTAMDNATANANDMLKKLDLLYNRARQSKITQDITEIVGGAEALK.

Belongs to the ATPase gamma chain family. F-type ATPases have 2 components, CF(1) - the catalytic core - and CF(0) - the membrane proton channel. CF(1) has five subunits: alpha(3), beta(3), gamma(1), delta(1), epsilon(1). CF(0) has three main subunits: a, b and c.

It is found in the cell membrane. Functionally, produces ATP from ADP in the presence of a proton gradient across the membrane. The gamma chain is believed to be important in regulating ATPase activity and the flow of protons through the CF(0) complex. The protein is ATP synthase gamma chain of Acetivibrio thermocellus (strain ATCC 27405 / DSM 1237 / JCM 9322 / NBRC 103400 / NCIMB 10682 / NRRL B-4536 / VPI 7372) (Clostridium thermocellum).